A 404-amino-acid chain; its full sequence is uncharacterized protein (404 aa).

Positions 262–278 (VSTGDTSPCGTEDSSPA) are enriched in polar residues. 2 disordered regions span residues 262–307 (VSTG…SPSL) and 319–340 (MKKSHSANDSEEFFREDDSGAD). Residues S268, S276, and S279 each carry the phosphoserine modification. Phosphothreonine is present on residues T290 and T293. 5 positions are modified to phosphoserine: S304, S306, S324, S358, and S362. Residues 319–336 (MKKSHSANDSEEFFREDD) show a composition bias toward basic and acidic residues.

This is an uncharacterized protein from Mus musculus (Mouse).